A 295-amino-acid chain; its full sequence is GTPase Era (295 aa).

The region spanning 7–176 (KTVSVCIIGR…ITSKAKIAPW (170 aa)) is the Era-type G domain. A G1 region spans residues 15 to 22 (GRPNSGKS). 15 to 22 (GRPNSGKS) is a GTP binding site. The tract at residues 41–45 (QTTRS) is G2. Positions 62 to 65 (DTPG) are G3. Residues 62–66 (DTPGI) and 124–127 (NKIE) contribute to the GTP site. The interval 124 to 127 (NKIE) is G4. A G5 region spans residues 152–154 (ISA). One can recognise a KH type-2 domain in the interval 204–281 (LQQELPYKLT…HLFLFVKVRE (78 aa)).

This sequence belongs to the TRAFAC class TrmE-Era-EngA-EngB-Septin-like GTPase superfamily. Era GTPase family. In terms of assembly, monomer.

The protein resides in the cytoplasm. The protein localises to the cell inner membrane. An essential GTPase that binds both GDP and GTP, with rapid nucleotide exchange. Plays a role in 16S rRNA processing and 30S ribosomal subunit biogenesis and possibly also in cell cycle regulation and energy metabolism. In Rickettsia canadensis (strain McKiel), this protein is GTPase Era.